Here is a 181-residue protein sequence, read N- to C-terminus: Acireductone dioxygenase (181 aa).

Fe(2+)-binding residues include His98, His100, Glu104, and His142. 4 residues coordinate Ni(2+): His98, His100, Glu104, and His142.

The protein belongs to the acireductone dioxygenase (ARD) family. Monomer. The cofactor is Fe(2+). Ni(2+) serves as cofactor.

It carries out the reaction 1,2-dihydroxy-5-(methylsulfanyl)pent-1-en-3-one + O2 = 3-(methylsulfanyl)propanoate + CO + formate + 2 H(+). The catalysed reaction is 1,2-dihydroxy-5-(methylsulfanyl)pent-1-en-3-one + O2 = 4-methylsulfanyl-2-oxobutanoate + formate + 2 H(+). Its pathway is amino-acid biosynthesis; L-methionine biosynthesis via salvage pathway; L-methionine from S-methyl-5-thio-alpha-D-ribose 1-phosphate: step 5/6. In terms of biological role, catalyzes 2 different reactions between oxygen and the acireductone 1,2-dihydroxy-3-keto-5-methylthiopentene (DHK-MTPene) depending upon the metal bound in the active site. Fe-containing acireductone dioxygenase (Fe-ARD) produces formate and 2-keto-4-methylthiobutyrate (KMTB), the alpha-ketoacid precursor of methionine in the methionine recycle pathway. Ni-containing acireductone dioxygenase (Ni-ARD) produces methylthiopropionate, carbon monoxide and formate, and does not lie on the methionine recycle pathway. The sequence is that of Acireductone dioxygenase from Alcanivorax borkumensis (strain ATCC 700651 / DSM 11573 / NCIMB 13689 / SK2).